The primary structure comprises 82 residues: Cytochrome b559 subunit alpha (82 aa).

A helical transmembrane segment spans residues 22–36 (VIHAITLPSIFLAGF). Histidine 24 provides a ligand contact to heme.

It belongs to the PsbE/PsbF family. Heterodimer of an alpha subunit and a beta subunit. PSII is composed of 1 copy each of membrane proteins PsbA, PsbB, PsbC, PsbD, PsbE, PsbF, PsbH, PsbI, PsbJ, PsbK, PsbL, PsbM, PsbT, PsbX, PsbY, PsbZ, Psb30/Ycf12, peripheral proteins PsbO, CyanoQ (PsbQ), PsbU, PsbV and a large number of cofactors. It forms dimeric complexes. Requires heme b as cofactor.

Its subcellular location is the cellular thylakoid membrane. Its function is as follows. This b-type cytochrome is tightly associated with the reaction center of photosystem II (PSII). PSII is a light-driven water:plastoquinone oxidoreductase that uses light energy to abstract electrons from H(2)O, generating O(2) and a proton gradient subsequently used for ATP formation. It consists of a core antenna complex that captures photons, and an electron transfer chain that converts photonic excitation into a charge separation. The sequence is that of Cytochrome b559 subunit alpha from Synechococcus sp. (strain WH7803).